A 382-amino-acid polypeptide reads, in one-letter code: F-box protein At3g27290 (382 aa).

One can recognise an F-box domain in the interval 16 to 105; that stretch reads RKLELGLGEF…VDQMLFETLS (90 aa).

In Arabidopsis thaliana (Mouse-ear cress), this protein is F-box protein At3g27290.